Consider the following 332-residue polypeptide: Sphingolipid delta(4)-desaturase DES1-like (332 aa).

Helical transmembrane passes span 55–75 (PWAF…AAIL), 83–103 (ILSI…LAIH), and 119–139 (CLGI…FQKY). The short motif at 103–107 (HELSH) is the Histidine box-1 element. Positions 140–144 (HLEHH) match the Histidine box-2 motif. 3 helical membrane-spanning segments follow: residues 164–184 (LVTN…FYAL), 197–217 (WEFI…LFFG), and 222–242 (AYLI…GHFI). A Histidine box-3 motif is present at residues 271–275 (HNEHH).

This sequence belongs to the fatty acid desaturase type 1 family. DEGS subfamily. In terms of tissue distribution, specifically expressed in flowers.

The protein resides in the endoplasmic reticulum membrane. It carries out the reaction an N-acylsphinganine + 2 Fe(II)-[cytochrome b5] + O2 + 2 H(+) = an N-acylsphing-4-enine + 2 Fe(III)-[cytochrome b5] + 2 H2O. Sphingolipid-delta-4-desaturase required for the biosynthesis of delta-4-unsaturated sphingolipids and derivatives. May be required for the biosynthesis of glucosylceramides. The chain is Sphingolipid delta(4)-desaturase DES1-like from Arabidopsis thaliana (Mouse-ear cress).